Here is a 572-residue protein sequence, read N- to C-terminus: MKQSKLLMPTLRDIPAEAEVKSHQLLLKAGYIRPIAAGMFSYLPLAKRVLNKIETIIREEMDKIDANEMLVPEVLPAELWQRSGRYETYGPALYKFKNRQDRDFILGPTHEETFTQLIADEIKSYKKLPLTVYQIQAKFRDENRPRFGLLRTREFIMKDAYSFSADQEGLDEAFHNMEEAYTNIFDRLGLEYRAIVGDAGAMGGSDSKEFSAPAAAGEDTIAYSDATDYAANLEMAKDFYERRSATAEQLALEKISTPNEKTIDDVATLLDKPKNELVKTIMFVADDELVAVVTTGDFEVNEVKVQNYLHADSLVMAEEADVRKAVGAGFGSLGPVGLPEEVKLLVDERAADLANFAAGANEDGMHYVNINWNRDVDLLAENVSDFRTVREGDLAIDGKGKLQFTSGIEIGHIFKLGTRYSKTLGAQVLDNNGRQTDVIMGSYGIGVSRLLSAIAEQKADEDGLVWPASVAPFDIHIVPINMKDEDQARVAEQLETLLVAQGMEVLVDDRKERAGVKFADADLIGLPIRITVGKKADEDVVEVKVRASNTNIEMRVSEVVDSVSVLLNASEK.

This sequence belongs to the class-II aminoacyl-tRNA synthetase family. ProS type 1 subfamily. In terms of assembly, homodimer.

Its subcellular location is the cytoplasm. The enzyme catalyses tRNA(Pro) + L-proline + ATP = L-prolyl-tRNA(Pro) + AMP + diphosphate. Catalyzes the attachment of proline to tRNA(Pro) in a two-step reaction: proline is first activated by ATP to form Pro-AMP and then transferred to the acceptor end of tRNA(Pro). As ProRS can inadvertently accommodate and process non-cognate amino acids such as alanine and cysteine, to avoid such errors it has two additional distinct editing activities against alanine. One activity is designated as 'pretransfer' editing and involves the tRNA(Pro)-independent hydrolysis of activated Ala-AMP. The other activity is designated 'posttransfer' editing and involves deacylation of mischarged Ala-tRNA(Pro). The misacylated Cys-tRNA(Pro) is not edited by ProRS. This Leuconostoc mesenteroides subsp. mesenteroides (strain ATCC 8293 / DSM 20343 / BCRC 11652 / CCM 1803 / JCM 6124 / NCDO 523 / NBRC 100496 / NCIMB 8023 / NCTC 12954 / NRRL B-1118 / 37Y) protein is Proline--tRNA ligase.